Reading from the N-terminus, the 29-residue chain is Toxin II.9 (29 aa).

Residues Lys-2–Glu-29 enclose the LCN-type CS-alpha/beta domain.

It belongs to the long (4 C-C) scorpion toxin superfamily. Sodium channel inhibitor family. Beta subfamily. In terms of tissue distribution, expressed by the venom gland.

Its subcellular location is the secreted. Its function is as follows. Binds to sodium channels (Nav) and shift the voltage of activation toward more negative potentials. This toxin is active on crustaceans. The chain is Toxin II.9 from Centruroides limpidus (Mexican scorpion).